The following is a 432-amino-acid chain: Enolase (432 aa).

Glutamine 167 is a (2R)-2-phosphoglycerate binding site. The active-site Proton donor is glutamate 209. Aspartate 246, glutamate 291, and aspartate 318 together coordinate Mg(2+). (2R)-2-phosphoglycerate-binding residues include lysine 343, arginine 372, serine 373, and lysine 394. Lysine 343 acts as the Proton acceptor in catalysis.

This sequence belongs to the enolase family. In terms of assembly, component of the RNA degradosome, a multiprotein complex involved in RNA processing and mRNA degradation. It depends on Mg(2+) as a cofactor.

The protein resides in the cytoplasm. Its subcellular location is the secreted. It is found in the cell surface. It catalyses the reaction (2R)-2-phosphoglycerate = phosphoenolpyruvate + H2O. Its pathway is carbohydrate degradation; glycolysis; pyruvate from D-glyceraldehyde 3-phosphate: step 4/5. Its function is as follows. Catalyzes the reversible conversion of 2-phosphoglycerate (2-PG) into phosphoenolpyruvate (PEP). It is essential for the degradation of carbohydrates via glycolysis. The protein is Enolase of Aliivibrio salmonicida (strain LFI1238) (Vibrio salmonicida (strain LFI1238)).